A 386-amino-acid chain; its full sequence is Branched-chain-amino-acid aminotransferase, cytosolic (386 aa).

Met1 is subject to N-acetylmethionine. Lys222 is subject to N6-(pyridoxal phosphate)lysine.

Belongs to the class-IV pyridoxal-phosphate-dependent aminotransferase family. As to quaternary structure, homodimer. Pyridoxal 5'-phosphate serves as cofactor. Expressed in brain and kidney. Overexpressed in MYC-induced brain tumors, lymphomas, as well as in a teratocarcinoma cell line.

Its subcellular location is the cytoplasm. The enzyme catalyses L-leucine + 2-oxoglutarate = 4-methyl-2-oxopentanoate + L-glutamate. It catalyses the reaction L-isoleucine + 2-oxoglutarate = (S)-3-methyl-2-oxopentanoate + L-glutamate. The catalysed reaction is L-valine + 2-oxoglutarate = 3-methyl-2-oxobutanoate + L-glutamate. Functionally, catalyzes the first reaction in the catabolism of the essential branched chain amino acids leucine, isoleucine, and valine. The chain is Branched-chain-amino-acid aminotransferase, cytosolic (Bcat1) from Mus musculus (Mouse).